A 448-amino-acid polypeptide reads, in one-letter code: Protein arginine N-methyltransferase 2 (448 aa).

2 interaction with ESR1 regions span residues 1-289 (MEAP…SALK) and 145-287 (KESL…NLSA). One can recognise an SH3 domain in the interval 42-101 (LQPEEFVAIADYTATDETQLSFLRGEKILILRQTTADWWWGERAGCCGYIPANHLGKQLE). An asymmetric dimethylarginine mark is found at Arg-73 and Arg-84. An interaction with RB1 region spans residues 95-219 (HLGKQLEEYD…DVVLPEKVDV (125 aa)). The 304-residue stretch at 111-414 (DEEYFDSYGT…CCVTKKSGME (304 aa)) folds into the SAM-dependent MTase PRMT-type domain. Residues His-124, Arg-133, Gly-157, Glu-180, and Glu-209 each contribute to the S-adenosyl-L-methionine site. Active-site residues include Glu-223 and Glu-232.

The protein belongs to the class I-like SAM-binding methyltransferase superfamily. Protein arginine N-methyltransferase family. As to quaternary structure, self-associates. Interacts with HNRNPUL1. Interacts with NFKBIA. Interacts with NCOA6 coactivator. Interacts (via SH3 domain) with PRMT8. Interacts with AR. Interacts with ESR1, ESR2, PGR, PPARG, RARA, RXRA and THRB. Interacts with RB1 and E2F1. As to expression, expressed in liver, pancreas, lung, brain, skeletal muscle, heart, muscle and fat.

It localises to the cytoplasm. The protein resides in the nucleus. The enzyme catalyses L-arginyl-[protein] + 2 S-adenosyl-L-methionine = N(omega),N(omega)-dimethyl-L-arginyl-[protein] + 2 S-adenosyl-L-homocysteine + 2 H(+). Arginine methyltransferase that methylates the guanidino nitrogens of arginyl residues in proteins such as STAT3, FBL, histone H4. May inhibit NF-kappa-B transcription, and promote apoptosis. Represses E2F1 transcriptional activity (in a RB1-dependent manner). Has a negative regulation effect on G1 to S transition of mitotic cell cycle. Involved in growth regulation. Acts as a coactivator (with NCOA2) of the androgen receptor (AR)-mediated transactivation. Acts as a coactivator (with estrogen) of estrogen receptor (ER)-mediated transactivation. Enhances PGR, PPARG, RARA-mediated transactivation. This Mus musculus (Mouse) protein is Protein arginine N-methyltransferase 2 (Prmt2).